Consider the following 239-residue polypeptide: 1-(5-phosphoribosyl)-5-[(5-phosphoribosylamino)methylideneamino] imidazole-4-carboxamide isomerase (239 aa).

The active-site Proton acceptor is the D8. D129 serves as the catalytic Proton donor.

The protein belongs to the HisA/HisF family.

It localises to the cytoplasm. It carries out the reaction 1-(5-phospho-beta-D-ribosyl)-5-[(5-phospho-beta-D-ribosylamino)methylideneamino]imidazole-4-carboxamide = 5-[(5-phospho-1-deoxy-D-ribulos-1-ylimino)methylamino]-1-(5-phospho-beta-D-ribosyl)imidazole-4-carboxamide. It functions in the pathway amino-acid biosynthesis; L-histidine biosynthesis; L-histidine from 5-phospho-alpha-D-ribose 1-diphosphate: step 4/9. The sequence is that of 1-(5-phosphoribosyl)-5-[(5-phosphoribosylamino)methylideneamino] imidazole-4-carboxamide isomerase from Roseobacter denitrificans (strain ATCC 33942 / OCh 114) (Erythrobacter sp. (strain OCh 114)).